We begin with the raw amino-acid sequence, 346 residues long: MLVLGIESSCDETGLALYDTQRGLLAHALHSQIAMHREYGGVVPELASRDHIRRALPLLEEVMAQSGTHRDDIDAIAFTQGPGLAGALLVGASIANALALAWNKPTVGIHHLEGHLLSPLLVDEPPPFPFIALLVSGGHTQLMRVTDVGVYETLGETLDDAAGEAFDKTAKLIGLGYPGGPEVSKLAETGTPGAVVLPRPMLHSGDLDFSFSGLKTAVLTQMKKFEAAKLESEALERAKADLARGFVDAAVDVLVAKSLAALKQTKLKRLVVAGGVGANRQLRAALSAAAAKRGFDVHYPDLALCTDNGAMIALAGALRLGRWPEQANADYAFTVKPRWDLASLAR.

Positions 111 and 115 each coordinate Fe cation. Substrate is bound by residues 134-138, Asp-167, Gly-180, and Asn-279; that span reads LVSGG. Asp-307 contributes to the Fe cation binding site.

The protein belongs to the KAE1 / TsaD family. The cofactor is Fe(2+).

Its subcellular location is the cytoplasm. It catalyses the reaction L-threonylcarbamoyladenylate + adenosine(37) in tRNA = N(6)-L-threonylcarbamoyladenosine(37) in tRNA + AMP + H(+). Functionally, required for the formation of a threonylcarbamoyl group on adenosine at position 37 (t(6)A37) in tRNAs that read codons beginning with adenine. Is involved in the transfer of the threonylcarbamoyl moiety of threonylcarbamoyl-AMP (TC-AMP) to the N6 group of A37, together with TsaE and TsaB. TsaD likely plays a direct catalytic role in this reaction. This Burkholderia ambifaria (strain MC40-6) protein is tRNA N6-adenosine threonylcarbamoyltransferase.